The sequence spans 554 residues: uncharacterized protein (554 aa).

This is an uncharacterized protein from Saccharomyces cerevisiae (strain ATCC 204508 / S288c) (Baker's yeast).